Here is a 360-residue protein sequence, read N- to C-terminus: Methionine import ATP-binding protein MetN (360 aa).

The interval 1–22 (MSHTASTPTPEEYSAQQPSTQG) is disordered. The ABC transporter domain maps to 25-265 (VEFRGITKVF…PQTQVAQKFV (241 aa)). Residue 62-69 (GYSGAGKS) coordinates ATP.

This sequence belongs to the ABC transporter superfamily. Methionine importer (TC 3.A.1.24) family. As to quaternary structure, the complex is composed of two ATP-binding proteins (MetN), two transmembrane proteins (MetI) and a solute-binding protein (MetQ).

It is found in the cell membrane. The enzyme catalyses L-methionine(out) + ATP + H2O = L-methionine(in) + ADP + phosphate + H(+). It carries out the reaction D-methionine(out) + ATP + H2O = D-methionine(in) + ADP + phosphate + H(+). Part of the ABC transporter complex MetNIQ involved in methionine import. Responsible for energy coupling to the transport system. In Corynebacterium glutamicum (strain ATCC 13032 / DSM 20300 / JCM 1318 / BCRC 11384 / CCUG 27702 / LMG 3730 / NBRC 12168 / NCIMB 10025 / NRRL B-2784 / 534), this protein is Methionine import ATP-binding protein MetN.